The primary structure comprises 326 residues: NADH-ubiquinone oxidoreductase chain 1 (326 aa).

The next 9 membrane-spanning stretches (helical) occupy residues 1-21 (MFLL…LVAV), 41-61 (PNIV…KLFV), 72-92 (IIIF…SWCV), 104-124 (INIG…GIIT), 152-172 (IGLI…TEIV), 177-197 (SIWF…SILA), 234-256 (YANM…LPPF), 268-288 (VWFG…RSSF), and 303-323 (ILLP…LSFN).

This sequence belongs to the complex I subunit 1 family.

Its subcellular location is the mitochondrion inner membrane. It catalyses the reaction a ubiquinone + NADH + 5 H(+)(in) = a ubiquinol + NAD(+) + 4 H(+)(out). Core subunit of the mitochondrial membrane respiratory chain NADH dehydrogenase (Complex I) that is believed to belong to the minimal assembly required for catalysis. Complex I functions in the transfer of electrons from NADH to the respiratory chain. The immediate electron acceptor for the enzyme is believed to be ubiquinone. This chain is NADH-ubiquinone oxidoreductase chain 1 (ND1), found in Chondrus crispus (Carrageen Irish moss).